The chain runs to 92 residues: Parbolysin P7 (92 aa).

Intrachain disulfides connect cysteine 15/cysteine 36, cysteine 21/cysteine 32, and cysteine 46/cysteine 59.

Belongs to the worm cytolysin family. In terms of tissue distribution, localized within the skin and proboscis and are most readily isolated from body mucus secretions.

The protein localises to the secreted. Cytolysin that shows hemolytic activity (on bovine erythrocytes, HC(50)=5.75 mg/ml). This hemolytic activity is completely inhibited by small unilamelar vesicles composed of PC/PG, PC/PI and PC/PS in 1:1 molar ratios (with at least 100 mg/ml concentration). The chain is Parbolysin P7 from Parborlasia corrugatus (Antarctic nemertean worm).